The chain runs to 339 residues: Glyceraldehyde-3-phosphate dehydrogenase (339 aa).

NAD(+)-binding positions include 12–13 (RI), Asp34, Arg78, and Thr120. Residues 149–151 (SCT), Thr180, 209–210 (TG), and Arg232 each bind D-glyceraldehyde 3-phosphate. Cys150 serves as the catalytic Nucleophile. Position 319 (Asn319) interacts with NAD(+).

This sequence belongs to the glyceraldehyde-3-phosphate dehydrogenase family. As to quaternary structure, homotetramer.

The protein localises to the cytoplasm. It carries out the reaction D-glyceraldehyde 3-phosphate + phosphate + NAD(+) = (2R)-3-phospho-glyceroyl phosphate + NADH + H(+). The protein operates within carbohydrate degradation; glycolysis; pyruvate from D-glyceraldehyde 3-phosphate: step 1/5. Its function is as follows. Catalyzes the oxidative phosphorylation of glyceraldehyde 3-phosphate (G3P) to 1,3-bisphosphoglycerate (BPG) using the cofactor NAD. The first reaction step involves the formation of a hemiacetal intermediate between G3P and a cysteine residue, and this hemiacetal intermediate is then oxidized to a thioester, with concomitant reduction of NAD to NADH. The reduced NADH is then exchanged with the second NAD, and the thioester is attacked by a nucleophilic inorganic phosphate to produce BPG. The sequence is that of Glyceraldehyde-3-phosphate dehydrogenase (gapA) from Haemophilus influenzae (strain ATCC 51907 / DSM 11121 / KW20 / Rd).